A 573-amino-acid polypeptide reads, in one-letter code: MLO-like protein 2 (573 aa).

Topologically, residues M1–T15 are extracellular. Residues W16–I36 form a helical membrane-spanning segment. The Cytoplasmic portion of the chain corresponds to H37–E61. Residues L62 to I82 form a helical membrane-spanning segment. At C83–H164 the chain is on the extracellular side. Residues I165–G185 traverse the membrane as a helical segment. Over K186–D287 the chain is Cytoplasmic. The helical transmembrane segment at F288–T308 threads the bilayer. Topologically, residues N309–L317 are extracellular. A helical transmembrane segment spans residues W318–I338. The Cytoplasmic segment spans residues T339 to R371. Residues F372–A392 form a helical membrane-spanning segment. Residues W393–L415 lie on the Extracellular side of the membrane. A helical membrane pass occupies residues V416 to V436. The Cytoplasmic segment spans residues T437 to K573. Residues D450 to R471 form a calmodulin-binding region. The segment at T462–K573 is disordered. Composition is skewed to polar residues over residues S473–S490 and N498–P513. Residue S512 is modified to Phosphoserine. Over residues E522–S548 the composition is skewed to basic and acidic residues.

The protein belongs to the MLO family.

The protein resides in the membrane. Functionally, may be involved in modulation of pathogen defense and leaf cell death. Activity seems to be regulated by Ca(2+)-dependent calmodulin binding and seems not to require heterotrimeric G proteins. This Arabidopsis thaliana (Mouse-ear cress) protein is MLO-like protein 2 (MLO2).